Consider the following 367-residue polypeptide: Outer membrane protein P2 (367 aa).

The signal sequence occupies residues 1–20 (MKKTLAALIVGAFAASAANA).

The protein belongs to the Gram-negative porin family. Homotrimer.

Its subcellular location is the cell outer membrane. Its function is as follows. Forms pores that allow passive diffusion of small molecules across the outer membrane. The polypeptide is Outer membrane protein P2 (ompP2) (Haemophilus influenzae).